A 241-amino-acid polypeptide reads, in one-letter code: Chromosome partition protein MukE (241 aa).

Positions 207 to 241 (DGEAATPDSLSQEKSAVKNDEEIEDELDEGLGEEE) are disordered. Over residues 227 to 241 (EEIEDELDEGLGEEE) the composition is skewed to acidic residues.

The protein belongs to the MukE family. As to quaternary structure, interacts, and probably forms a ternary complex, with MukF and MukB. The complex formation is stimulated by calcium or magnesium.

The protein resides in the cytoplasm. It localises to the nucleoid. In terms of biological role, involved in chromosome condensation, segregation and cell cycle progression. May participate in facilitating chromosome segregation by condensation DNA from both sides of a centrally located replisome during cell division. Probably acts via its interaction with MukB and MukF. In Mannheimia succiniciproducens (strain KCTC 0769BP / MBEL55E), this protein is Chromosome partition protein MukE.